The primary structure comprises 106 residues: UPF0060 membrane protein CHU_3331 (106 aa).

Transmembrane regions (helical) follow at residues Phe-5–Phe-25, Ala-31–Ile-51, Ala-59–Glu-79, and Ile-85–Pro-105.

This sequence belongs to the UPF0060 family.

The protein resides in the cell inner membrane. The polypeptide is UPF0060 membrane protein CHU_3331 (Cytophaga hutchinsonii (strain ATCC 33406 / DSM 1761 / CIP 103989 / NBRC 15051 / NCIMB 9469 / D465)).